Here is a 448-residue protein sequence, read N- to C-terminus: Exodeoxyribonuclease 7 large subunit (448 aa).

It belongs to the XseA family. Heterooligomer composed of large and small subunits.

It is found in the cytoplasm. The catalysed reaction is Exonucleolytic cleavage in either 5'- to 3'- or 3'- to 5'-direction to yield nucleoside 5'-phosphates.. In terms of biological role, bidirectionally degrades single-stranded DNA into large acid-insoluble oligonucleotides, which are then degraded further into small acid-soluble oligonucleotides. The sequence is that of Exodeoxyribonuclease 7 large subunit from Shewanella sp. (strain MR-4).